Here is a 128-residue protein sequence, read N- to C-terminus: Glycine cleavage system H protein (128 aa).

Positions 25-107 constitute a Lipoyl-binding domain; that stretch reads TITVGITHHA…YGAGWFFKLK (83 aa). Lysine 66 bears the N6-lipoyllysine mark.

Belongs to the GcvH family. In terms of assembly, the glycine cleavage system is composed of four proteins: P, T, L and H. It depends on (R)-lipoate as a cofactor.

The glycine cleavage system catalyzes the degradation of glycine. The H protein shuttles the methylamine group of glycine from the P protein to the T protein. This is Glycine cleavage system H protein from Neisseria meningitidis serogroup B (strain ATCC BAA-335 / MC58).